The chain runs to 518 residues: Tyrosine/DOPA decarboxylase 1 (518 aa).

Lysine 321 carries the N6-(pyridoxal phosphate)lysine modification.

It belongs to the group II decarboxylase family. Homodimer. Pyridoxal 5'-phosphate is required as a cofactor. In terms of tissue distribution, predominantly expressed in the roots.

It carries out the reaction L-tyrosine + H(+) = tyramine + CO2. The enzyme catalyses L-dopa + H(+) = dopamine + CO2. The catalysed reaction is 5-hydroxy-L-tryptophan + H(+) = serotonin + CO2. Its function is as follows. Marginally higher substrate specificity for L-DOPA over L-tyrosine. This is Tyrosine/DOPA decarboxylase 1 (TYDC1) from Papaver somniferum (Opium poppy).